Here is a 473-residue protein sequence, read N- to C-terminus: MSPQTETKASVGFKAGVKDYKLTYYTPQYQTKDTDILAAFRVTPQPGVPPEEAGAAVAAESSTGTWTTVWTDGLTSLDRYKGRCYHIEPVAGEENQFIAYVAYPLDLFEEGSVTNMFTSIVGNVFGFKALRALRLEDLRIPISYVKTFQGPPHGIQVERDKLNKYGRPLLGCTIKPKLGLSAKNYGRAVYECLRGGLDFTKDDENVNSQPFMRWRDRFLFCAEALFKAQAETGEIKGHYLNATAGTCEEMIKRAVFARELGVPIIMHDYLTGGFTANTSLAHYCRDNGLLLHIHRAMHAVIDRQKNHGMHFRVLAKALRLSGGDHVHSGTVVGKLEGEREITLGFVDLLRDDFVEKDRSRGIYFTQDWVSLPGVLPVASGGIHVWHMPALTEIFGDDSVLQFGGGTLGHPWGNAPGAVANRVALEACVQARNEGRDLAREGNEIIREASKWSPELAAACEVWKAIKFEFPAMD.

Residues 1–2 constitute a propeptide that is removed on maturation; the sequence is MS. The residue at position 3 (Pro-3) is an N-acetylproline. An N6,N6,N6-trimethyllysine modification is found at Lys-14. Asn-123 and Thr-173 together coordinate substrate. Lys-175 acts as the Proton acceptor in catalysis. Lys-177 is a substrate binding site. Mg(2+)-binding residues include Lys-201, Asp-203, and Glu-204. Lys-201 carries the post-translational modification N6-carboxylysine. The active-site Proton acceptor is His-294. Substrate-binding residues include Arg-295, His-327, and Ser-379.

Belongs to the RuBisCO large chain family. Type I subfamily. As to quaternary structure, heterohexadecamer of 8 large chains and 8 small chains; disulfide-linked. The disulfide link is formed within the large subunit homodimers. The cofactor is Mg(2+). In terms of processing, the disulfide bond which can form in the large chain dimeric partners within the hexadecamer appears to be associated with oxidative stress and protein turnover.

It localises to the plastid. Its subcellular location is the chloroplast. The catalysed reaction is 2 (2R)-3-phosphoglycerate + 2 H(+) = D-ribulose 1,5-bisphosphate + CO2 + H2O. It catalyses the reaction D-ribulose 1,5-bisphosphate + O2 = 2-phosphoglycolate + (2R)-3-phosphoglycerate + 2 H(+). In terms of biological role, ruBisCO catalyzes two reactions: the carboxylation of D-ribulose 1,5-bisphosphate, the primary event in carbon dioxide fixation, as well as the oxidative fragmentation of the pentose substrate in the photorespiration process. Both reactions occur simultaneously and in competition at the same active site. This chain is Ribulose bisphosphate carboxylase large chain, found in Cajanus cajan (Pigeon pea).